Consider the following 554-residue polypeptide: Phosphomannomutase (554 aa).

Ser149 acts as the Phosphoserine intermediate in catalysis. 4 residues coordinate Mg(2+): Ser149, Asp301, Asp303, and Asp305.

This sequence belongs to the phosphohexose mutase family. It depends on Mg(2+) as a cofactor.

The enzyme catalyses alpha-D-mannose 1-phosphate = D-mannose 6-phosphate. The sequence is that of Phosphomannomutase (manB) from Mycoplasma pneumoniae (strain ATCC 29342 / M129 / Subtype 1) (Mycoplasmoides pneumoniae).